A 364-amino-acid polypeptide reads, in one-letter code: MKDSLRERLDQMVDRFEEVTALLSDPDTISDNNKFRELSMEHSELSEITALWQRYRQAEIDKKDAQEMINDASDPDMKEMMQEEIDSASRDIEAMEEELNVMMLPKDPNDKVPAFLEIRAGTGGDEAAIFSGDLFRMYERYASSQGWTIEVLSANEGEHGGYKEIISRVSGNDVYGRLKFESGAHRVQRVPETESQGRVHTSACTVAVMPEVEIDDTVELNPADIRMDTFRSSGAGGQHVNTTDSAVRLTHIPTGVVAECQQERSQHKNRAKAMQMLIARIQQAKVQEQVDTADALRRNLVGSGDRSERIRTYNFPQGRMTDHRINLTLYKLDAIMEGDLTELLDALNREHQADLMASIGGGDD.

The residue at position 238 (Gln-238) is an N5-methylglutamine.

The protein belongs to the prokaryotic/mitochondrial release factor family. Methylated by PrmC. Methylation increases the termination efficiency of RF1.

Its subcellular location is the cytoplasm. Functionally, peptide chain release factor 1 directs the termination of translation in response to the peptide chain termination codons UAG and UAA. The protein is Peptide chain release factor 1 of Psychrobacter sp. (strain PRwf-1).